The chain runs to 422 residues: L-threonine dehydratase biosynthetic IlvA (422 aa).

At Lys-56 the chain carries N6-(pyridoxal phosphate)lysine. Pyridoxal 5'-phosphate-binding positions include Asn-83, 189 to 193, and Ser-315; that span reads GGGGL. In terms of domain architecture, ACT-like spans 339 to 413; that stretch reads HYFILNFPQR…FDPSNIYINE (75 aa).

It belongs to the serine/threonine dehydratase family. In terms of assembly, homotetramer. Requires pyridoxal 5'-phosphate as cofactor.

It carries out the reaction L-threonine = 2-oxobutanoate + NH4(+). It functions in the pathway amino-acid biosynthesis; L-isoleucine biosynthesis; 2-oxobutanoate from L-threonine: step 1/1. Its function is as follows. Catalyzes the anaerobic formation of alpha-ketobutyrate and ammonia from threonine in a two-step reaction. The first step involved a dehydration of threonine and a production of enamine intermediates (aminocrotonate), which tautomerizes to its imine form (iminobutyrate). Both intermediates are unstable and short-lived. The second step is the nonenzymatic hydrolysis of the enamine/imine intermediates to form 2-ketobutyrate and free ammonia. In the low water environment of the cell, the second step is accelerated by RidA. The sequence is that of L-threonine dehydratase biosynthetic IlvA (ilvA) from Staphylococcus aureus (strain Mu50 / ATCC 700699).